We begin with the raw amino-acid sequence, 286 residues long: Polyamine aminopropyltransferase (286 aa).

The 234-residue stretch at 5–238 (TMWHETLHDQ…GIMTFAWATD (234 aa)) folds into the PABS domain. An S-methyl-5'-thioadenosine-binding site is contributed by Q33. Spermidine-binding residues include H64 and D88. S-methyl-5'-thioadenosine-binding positions include E108 and 140 to 141 (DG). The Proton acceptor role is filled by D158. 158–161 (DCTD) provides a ligand contact to spermidine. P165 is an S-methyl-5'-thioadenosine binding site.

This sequence belongs to the spermidine/spermine synthase family. Homodimer or homotetramer.

It is found in the cytoplasm. The catalysed reaction is S-adenosyl 3-(methylsulfanyl)propylamine + putrescine = S-methyl-5'-thioadenosine + spermidine + H(+). It functions in the pathway amine and polyamine biosynthesis; spermidine biosynthesis; spermidine from putrescine: step 1/1. Its function is as follows. Catalyzes the irreversible transfer of a propylamine group from the amino donor S-adenosylmethioninamine (decarboxy-AdoMet) to putrescine (1,4-diaminobutane) to yield spermidine. This is Polyamine aminopropyltransferase from Salmonella newport (strain SL254).